The following is a 340-amino-acid chain: Nicotianamine synthase 9 (340 aa).

It belongs to the nicotianamine synthase (NAS)-like family. As to quaternary structure, homotrimer.

The catalysed reaction is 3 S-adenosyl-L-methionine = nicotianamine + 3 S-methyl-5'-thioadenosine + 3 H(+). Its function is as follows. Synthesizes nicotianamine, a polyamine that is the first intermediate in the synthesis of the phytosiderophores of the mugineic acid type found in gramineae which serves as a sensor for the physiological iron status within the plant, and/or might be involved in the transport of iron. The protein is Nicotianamine synthase 9 (NAS9) of Hordeum vulgare (Barley).